An 897-amino-acid chain; its full sequence is DNA mismatch repair protein MutS (897 aa).

654–661 (GPNMAGKS) contributes to the ATP binding site.

Belongs to the DNA mismatch repair MutS family.

This protein is involved in the repair of mismatches in DNA. It is possible that it carries out the mismatch recognition step. This protein has a weak ATPase activity. The chain is DNA mismatch repair protein MutS from Maricaulis maris (strain MCS10) (Caulobacter maris).